The primary structure comprises 215 residues: MEITVDQMYNIENKGHDMGFLKKFMMENAGAAAVKRLVEKLGNVDSKNILIFVGMGNNGGDGLVMARHLAGYNAKVTVMLLGNPENIKTEESNWNWSILEKMPSVKLMTGGTTNFDFKPDVIVDGILGTGISGEIREPYASAINYINQTDCYKFAVDVPSGLDPQTGETANIFTKCDMTVTFHKMKQGIPKRKDLTGELFAEKIGIPPEAEEGIL.

Positions 8 to 212 (MYNIENKGHD…KIGIPPEAEE (205 aa)) constitute a YjeF N-terminal domain. Position 57–61 (57–61 (NNGGD)) interacts with (6S)-NADPHX. K(+)-binding residues include N58 and D124. Residues 128–134 (GTGISGE), Y139, and D157 contribute to the (6S)-NADPHX site. Position 160 (S160) interacts with K(+).

Belongs to the NnrE/AIBP family. K(+) is required as a cofactor.

It carries out the reaction (6R)-NADHX = (6S)-NADHX. The enzyme catalyses (6R)-NADPHX = (6S)-NADPHX. In terms of biological role, catalyzes the epimerization of the S- and R-forms of NAD(P)HX, a damaged form of NAD(P)H that is a result of enzymatic or heat-dependent hydration. This is a prerequisite for the S-specific NAD(P)H-hydrate dehydratase to allow the repair of both epimers of NAD(P)HX. The protein is NAD(P)H-hydrate epimerase of Nitrosopumilus maritimus (strain SCM1).